Here is a 227-residue protein sequence, read N- to C-terminus: Cytidylate kinase (227 aa).

Residue 12-20 (GPSGAGKGT) coordinates ATP.

Belongs to the cytidylate kinase family. Type 1 subfamily.

It localises to the cytoplasm. It carries out the reaction CMP + ATP = CDP + ADP. The enzyme catalyses dCMP + ATP = dCDP + ADP. The chain is Cytidylate kinase from Escherichia fergusonii (strain ATCC 35469 / DSM 13698 / CCUG 18766 / IAM 14443 / JCM 21226 / LMG 7866 / NBRC 102419 / NCTC 12128 / CDC 0568-73).